The sequence spans 256 residues: Small ribosomal subunit protein uS2 (256 aa).

It belongs to the universal ribosomal protein uS2 family.

The polypeptide is Small ribosomal subunit protein uS2 (Brucella abortus (strain S19)).